We begin with the raw amino-acid sequence, 113 residues long: Large ribosomal subunit protein bL17 (113 aa).

This sequence belongs to the bacterial ribosomal protein bL17 family. Part of the 50S ribosomal subunit. Contacts protein L32.

The chain is Large ribosomal subunit protein bL17 from Clostridium botulinum (strain ATCC 19397 / Type A).